Reading from the N-terminus, the 348-residue chain is Holliday junction branch migration complex subunit RuvB (348 aa).

The disordered stretch occupies residues methionine 1 to threonine 20. Residues methionine 1–tyrosine 183 are large ATPase domain (RuvB-L). ATP-binding positions include leucine 22, arginine 23, glycine 64, lysine 67, threonine 68, threonine 69, glutamate 130–phenylalanine 132, arginine 173, tyrosine 183, and arginine 220. Residue threonine 68 coordinates Mg(2+). The interval threonine 184–glutamate 254 is small ATPAse domain (RuvB-S). A head domain (RuvB-H) region spans residues alanine 257–alanine 348. DNA contacts are provided by arginine 293, arginine 312, and arginine 317.

Belongs to the RuvB family. As to quaternary structure, homohexamer. Forms an RuvA(8)-RuvB(12)-Holliday junction (HJ) complex. HJ DNA is sandwiched between 2 RuvA tetramers; dsDNA enters through RuvA and exits via RuvB. An RuvB hexamer assembles on each DNA strand where it exits the tetramer. Each RuvB hexamer is contacted by two RuvA subunits (via domain III) on 2 adjacent RuvB subunits; this complex drives branch migration. In the full resolvosome a probable DNA-RuvA(4)-RuvB(12)-RuvC(2) complex forms which resolves the HJ.

The protein localises to the cytoplasm. It carries out the reaction ATP + H2O = ADP + phosphate + H(+). Its function is as follows. The RuvA-RuvB-RuvC complex processes Holliday junction (HJ) DNA during genetic recombination and DNA repair, while the RuvA-RuvB complex plays an important role in the rescue of blocked DNA replication forks via replication fork reversal (RFR). RuvA specifically binds to HJ cruciform DNA, conferring on it an open structure. The RuvB hexamer acts as an ATP-dependent pump, pulling dsDNA into and through the RuvAB complex. RuvB forms 2 homohexamers on either side of HJ DNA bound by 1 or 2 RuvA tetramers; 4 subunits per hexamer contact DNA at a time. Coordinated motions by a converter formed by DNA-disengaged RuvB subunits stimulates ATP hydrolysis and nucleotide exchange. Immobilization of the converter enables RuvB to convert the ATP-contained energy into a lever motion, pulling 2 nucleotides of DNA out of the RuvA tetramer per ATP hydrolyzed, thus driving DNA branch migration. The RuvB motors rotate together with the DNA substrate, which together with the progressing nucleotide cycle form the mechanistic basis for DNA recombination by continuous HJ branch migration. Branch migration allows RuvC to scan DNA until it finds its consensus sequence, where it cleaves and resolves cruciform DNA. The sequence is that of Holliday junction branch migration complex subunit RuvB from Bradyrhizobium sp. (strain BTAi1 / ATCC BAA-1182).